A 497-amino-acid chain; its full sequence is Arabinose import ATP-binding protein AraG (497 aa).

ABC transporter domains are found at residues 6 to 242 and 250 to 497; these read LRFD…MVGR and FRPR…ALPA. 38-45 is a binding site for ATP; that stretch reads GENGAGKS.

The protein belongs to the ABC transporter superfamily. Arabinose importer (TC 3.A.1.2.2) family. The complex is composed of two ATP-binding proteins (AraG), two transmembrane proteins (AraH) and a solute-binding protein (AraF).

It localises to the cell inner membrane. The enzyme catalyses L-arabinose(out) + ATP + H2O = L-arabinose(in) + ADP + phosphate + H(+). In terms of biological role, part of the ABC transporter complex AraFGH involved in arabinose import. Responsible for energy coupling to the transport system. This is Arabinose import ATP-binding protein AraG from Chromohalobacter salexigens (strain ATCC BAA-138 / DSM 3043 / CIP 106854 / NCIMB 13768 / 1H11).